We begin with the raw amino-acid sequence, 280 residues long: NAD kinase (280 aa).

D60 functions as the Proton acceptor in the catalytic mechanism. Residues 60 to 61 (DG), 134 to 135 (ND), R145, D164, 175 to 180 (TAYSLS), and Q234 each bind NAD(+).

This sequence belongs to the NAD kinase family. It depends on a divalent metal cation as a cofactor.

It localises to the cytoplasm. It catalyses the reaction NAD(+) + ATP = ADP + NADP(+) + H(+). Involved in the regulation of the intracellular balance of NAD and NADP, and is a key enzyme in the biosynthesis of NADP. Catalyzes specifically the phosphorylation on 2'-hydroxyl of the adenosine moiety of NAD to yield NADP. This is NAD kinase from Carboxydothermus hydrogenoformans (strain ATCC BAA-161 / DSM 6008 / Z-2901).